A 571-amino-acid chain; its full sequence is Podocalyxin (571 aa).

Residues 1–22 form the signal peptide; that stretch reads MRPAPPPPLLLLLLLLPPPSLS. Residues 23–474 lie on the Extracellular side of the membrane; that stretch reads HDGTIIAATS…EETEDRFSMP (452 aa). The tract at residues 94–361 is disordered; that stretch reads NTVIAPDQDE…QGDDRIKCES (268 aa). Over residues 106–116 the composition is skewed to polar residues; it reads STNPTIATSDS. An N-linked (GlcNAc...) asparagine glycan is attached at Asn-123. 4 stretches are compositionally biased toward polar residues: residues 126 to 144, 151 to 169, 176 to 203, and 218 to 245; these read ILPSATNSMKPDTPVTQTA, NPGTTVSHMTSENTEQTTS, KPSSITPALTSIITPTSPRQPSANSTTL, and TASSSLGTKVVPSSSLYGTSPTRTSSVT. An N-linked (GlcNAc...) asparagine glycan is attached at Asn-199. Over residues 282–300 the composition is skewed to low complexity; the sequence is TTSLPSETESLESPSSESP. Over residues 301–311 the composition is skewed to pro residues; that stretch reads SQPPKLRPTGP. Positions 312–322 are enriched in low complexity; the sequence is PSSGSSGPAAS. N-linked (GlcNAc...) asparagine glycans are attached at residues Asn-373 and Asn-383. The chain crosses the membrane as a helical span at residues 475-495; it reads LIITIVCMASFLLLVAALYGC. At 496–571 the chain is on the cytoplasmic side; sequence CHQRLSQRKD…DLDEEEDTHL (76 aa). Residue Thr-531 is modified to Phosphothreonine. Ser-550 is modified (phosphoserine). A Phosphothreonine modification is found at Thr-569.

This sequence belongs to the podocalyxin family. Found in a complex with EZR, PODXL and NHERF2. Associates with the actin cytoskeleton through complex formation with EZR and NHERF2. Interacts (via the C-terminal PDZ-binding motif DTHL) with NHERF1 (via the PDZ domains); interaction is not detected in glomerular epithelium cells. Interacts (via the C-terminal PDZ-binding motif DTHL) with NHERF2 (via the PDZ 1 domain); interaction is detected in glomerular epithelium cells. Interacts with EZR. Monomer; when associated with the membrane raft. Oligomer; when integrated in the apical membrane. Interacts with NHERF2. Interacts (via the C-terminal PDZ-binding motif DTHL) with NHERF1 (via the PDZ domains); the interaction take place early in the secretory pathway and is necessary for its apical membrane sorting. In terms of processing, N- and O-linked glycosylated. Sialoglycoprotein. In terms of tissue distribution, expressed in glomerular and tubular epithelial cells and peritubular capillaries of the kidney (at protein level). Expressed in heart, lung, renal cortex and medulla, kidney and muscle.

It localises to the apical cell membrane. It is found in the membrane raft. The protein localises to the cell projection. Its subcellular location is the lamellipodium. The protein resides in the filopodium. It localises to the ruffle. It is found in the microvillus. The protein localises to the membrane. In terms of biological role, involved in the regulation of both adhesion and cell morphology and cancer progression. Functions as an anti-adhesive molecule that maintains an open filtration pathway between neighboring foot processes in the podocyte by charge repulsion. Acts as a pro-adhesive molecule, enhancing the adherence of cells to immobilized ligands, increasing the rate of migration and cell-cell contacts in an integrin-dependent manner. Induces the formation of apical actin-dependent microvilli. Involved in the formation of a preapical plasma membrane subdomain to set up initial epithelial polarization and the apical lumen formation during renal tubulogenesis. Plays a role in cancer development and aggressiveness by inducing cell migration and invasion through its interaction with the actin-binding protein EZR. Affects EZR-dependent signaling events, leading to increased activities of the MAPK and PI3K pathways in cancer cells. The sequence is that of Podocalyxin (PODXL) from Canis lupus familiaris (Dog).